A 404-amino-acid polypeptide reads, in one-letter code: MQYSEIMIRYGELSTKKKNRMRFINKLKNNMEHVLSIYPDVSVKTDRDRGHVYLNGTDYHEVAESLKEIFGIQAFSPSFKVEKNVDTLVKAVQEIMTSVYKDGMTFKITAKRSDHSFELDSRALNHTLGDAVFSVLPNIKAQMKQPDINLKVEIRDEAAYISYENIRGAGGLPVGTSGKGMLMLSGGIDSPVAGYLALKRGVDIEAVHFASPPYTSPGALKKAHDLTRKLTKFGGNIQFIEVPFTEIQEEIKEKAPEAYLMTLTRRFMMRITDRIRENRNGLVIINGESLGQVASQTLESMQAINAVTATPIIRPVVTMDKLEIIDIAQKIDTFDISIQPFEDCCTIFAPDRPKTNPKIKNTEQYEKRMDVEGLVERAVAGIMVTTIQPQADSDDVDDLIDDLL.

Positions 60-165 (HEVAESLKEI…DEAAYISYEN (106 aa)) constitute a THUMP domain. ATP contacts are provided by residues 183–184 (ML), 208–209 (HF), Arg-265, Gly-287, and Gln-296.

It belongs to the ThiI family.

It is found in the cytoplasm. The catalysed reaction is [ThiI sulfur-carrier protein]-S-sulfanyl-L-cysteine + a uridine in tRNA + 2 reduced [2Fe-2S]-[ferredoxin] + ATP + H(+) = [ThiI sulfur-carrier protein]-L-cysteine + a 4-thiouridine in tRNA + 2 oxidized [2Fe-2S]-[ferredoxin] + AMP + diphosphate. It carries out the reaction [ThiS sulfur-carrier protein]-C-terminal Gly-Gly-AMP + S-sulfanyl-L-cysteinyl-[cysteine desulfurase] + AH2 = [ThiS sulfur-carrier protein]-C-terminal-Gly-aminoethanethioate + L-cysteinyl-[cysteine desulfurase] + A + AMP + 2 H(+). It functions in the pathway cofactor biosynthesis; thiamine diphosphate biosynthesis. Functionally, catalyzes the ATP-dependent transfer of a sulfur to tRNA to produce 4-thiouridine in position 8 of tRNAs, which functions as a near-UV photosensor. Also catalyzes the transfer of sulfur to the sulfur carrier protein ThiS, forming ThiS-thiocarboxylate. This is a step in the synthesis of thiazole, in the thiamine biosynthesis pathway. The sulfur is donated as persulfide by IscS. This Streptococcus agalactiae serotype III (strain NEM316) protein is Probable tRNA sulfurtransferase.